Consider the following 670-residue polypeptide: ATP-dependent DNA helicase Rep (670 aa).

The 277-residue stretch at 1–277 (MLFNEHQKKA…IIMQHNYRSS (277 aa)) folds into the UvrD-like helicase ATP-binding domain. ATP is bound by residues 22–29 (AGAGSGKT) and Arg-275. A UvrD-like helicase C-terminal domain is found at 278–562 (GRILKVANAL…QLMTLHASKG (285 aa)).

Belongs to the helicase family. UvrD subfamily. In terms of assembly, homodimer.

It carries out the reaction Couples ATP hydrolysis with the unwinding of duplex DNA by translocating in the 3'-5' direction.. It catalyses the reaction ATP + H2O = ADP + phosphate + H(+). Functionally, rep helicase is a single-stranded DNA-dependent ATPase involved in DNA replication; it can initiate unwinding at a nick in the DNA. It binds to the single-stranded DNA and acts in a progressive fashion along the DNA in the 3' to 5' direction. This is ATP-dependent DNA helicase Rep from Buchnera aphidicola subsp. Baizongia pistaciae (strain Bp).